The primary structure comprises 140 residues: Alpha-lactalbumin (140 aa).

A signal peptide spans 1 to 19 (MMSLLPLLLIGIVLPATQA). Residues 20 to 140 (KDYGKCELNQ…CRENLDQWNC (121 aa)) enclose the C-type lysozyme domain. Cystine bridges form between Cys25–Cys140, Cys47–Cys131, Cys80–Cys96, and Cys92–Cys110. 5 residues coordinate Ca(2+): Lys98, Asp101, Asp103, Asp106, and Asp107.

Lactose synthase (LS) is a heterodimer of a catalytic component, beta1,4-galactosyltransferase (beta4Gal-T1) and a regulatory component, alpha-lactalbumin (LA). In terms of tissue distribution, mammary gland specific. Secreted in milk.

It localises to the secreted. In terms of biological role, regulatory subunit of lactose synthase, changes the substrate specificity of galactosyltransferase in the mammary gland making glucose a good acceptor substrate for this enzyme. This enables LS to synthesize lactose, the major carbohydrate component of milk. In other tissues, galactosyltransferase transfers galactose onto the N-acetylglucosamine of the oligosaccharide chains in glycoproteins. In Trichosurus vulpecula (Brush-tailed possum), this protein is Alpha-lactalbumin (LALBA).